Consider the following 1191-residue polypeptide: Zinc finger protein ush (1191 aa).

Disordered regions lie at residues 1–153 (MLSS…PKYP) and 169–194 (PDAK…DTQA). Basic and acidic residues predominate over residues 19-28 (VDSRDSKDLS). Residues 61–73 (IDDDADEDAEFEE) are compositionally biased toward acidic residues. Residues Ser116 and Ser118 each carry the phosphoserine modification. A compositionally biased stretch (pro residues) spans 130 to 151 (ATPPSEPEASPCPSPSPCPTPK). A CCHC FOG-type 1 zinc finger spans residues 202–235 (LLKPARFMCLPCGIAFSSPSTLEAHQAYYCSHRI). Residues Cys210, Cys213, His226, and Cys231 each coordinate Zn(2+). A disordered region spans residues 239 to 274 (DEAGSDKSGAGGSGATAGDAAGLTGGSTEPPAKMAR). Positions 254-266 (TAGDAAGLTGGST) are enriched in low complexity. The C2H2-type 1 zinc finger occupies 279 to 301 (YGCTQCSYSADKKVSLNRHMRMH). Positions 304–338 (SPAAPTLAGLPSLLQNGIAPPGVTPNPMEDSSSQQ) are disordered. A CCHC FOG-type 2 zinc finger spans residues 335–368 (SSQQTDRYCSHCDIRFNNIKTYRAHKQHYCSSRR). Residues Cys343, Cys346, His359, and Cys364 each contribute to the Zn(2+) site. Disordered regions lie at residues 361–413 (QHYC…ARNK), 504–540 (EPER…ESAP), and 601–635 (APSL…MSPP). The span at 383–394 (AGSGPGSAGGSI) shows a compositional bias: gly residues. Composition is skewed to low complexity over residues 509 to 523 (SAPS…AKSS), 602 to 613 (PSLPSSPSMSPS), and 620 to 635 (SPRS…MSPP). 2 CCHC FOG-type zinc fingers span residues 720 to 753 (YVKK…SARS) and 791 to 824 (PVAY…PKGG). Zn(2+)-binding residues include Cys728, Cys731, His744, Cys749, Cys799, Cys802, His815, and Cys820. 3 C2H2-type zinc fingers span residues 882–907 (NKCP…HGTV), 910–932 (YRCS…IRTH), and 983–1006 (FNCD…KLMH). The interval 1011 to 1073 (INSPSISPDT…HENNNSPIAT (63 aa)) is disordered. A phosphoserine mark is found at Ser1013, Ser1015, and Ser1017. Positions 1025–1040 (VTSNPTTNQHSNSDVS) are enriched in polar residues. The CCHC FOG-type 5 zinc finger occupies 1113–1146 (AAEVMKKYCSTCDISFNYVKTYLAHKQFYCKNKP). Zn(2+)-binding residues include Cys1121, Cys1124, His1137, and Cys1142. Residue Ser1156 is modified to Phosphoserine.

The protein belongs to the FOG (Friend of GATA) family. As to quaternary structure, interacts with pnr, although weak this interaction is essential. Interacts with the isoform SrpNC of srp. Interacts with CtBP corepressor. First expressed in stage 5 at high levels in the primordium of the amnioserosa. Also expressed in germ band extending embryos in cells of the developing anterior and posterior midgut and in hemocyte precursors present in the cephalic mesoderm. In embryonic stage 8, it is expressed in blood cell precursors. By stage 10, it is expressed in hemocyte precursors that have spread throughout the lateral and ventral head mesoderm. By stage 11, it is expressed in the dorsal ectoderm and in precursor cells of the hemocytes and fat body. As embryogenesis proceeds, it is also expressed in stage 13 plasmatocytes migrating throughout the head mesoderm and down the ventral midline. By late embryogenesis, expression strongly decreases but remains in the dorsal ectoderm during dorsal closure, in cells within, or associated with, the central nervous system, and in plasmatocytes circulating throughout the embryonic hemolymph. During larval development, it is expressed in primary and secondary lobes of lymph glands. Expressed in the dorsal part of the thoracic imaginal disk.

The protein localises to the nucleus. Functionally, transcription regulator that modulates expression mediated by transcription factors of the GATA family such as pnr and srp. Represses transcription of proneural achaete-scute complex (AS-C), which is usually activated by pnr. Involved in cardiogenesis, blood, and eye development. During hematopoiesis, it is required to restrict the number of crystal cells, probably via its interaction with the isoform SrpNC of srp. Negatively regulates expression of sr. Probably acts by interacting with the GATA-type zinc finger of proteins such as pnr and srp, possibly antagonizing the interaction between the GATA-type zinc finger and some cofactor. In Drosophila melanogaster (Fruit fly), this protein is Zinc finger protein ush (ush).